The chain runs to 424 residues: Otefin (424 aa).

The LEM domain maps to 1 to 30; that stretch reads MADVDDFDSLSNAELRAKMLAQGLPNIPVT. Residues 1 to 50 are required for binding to Med and germline stem cell maintenance; that stretch reads MADVDDFDSLSNAELRAKMLAQGLPNIPVTDSSRKVLVKRLRASIGGQAS. Residues 42-186 are disordered; it reads RASIGGQASP…SSKRADREEN (145 aa). A phosphoserine mark is found at S44, S50, and S54. T63 carries the phosphothreonine modification. Positions 65-80 are enriched in low complexity; sequence APAPGAPSAPAAASTP. Residues 92–99 carry the Nuclear localization signal motif; it reads ATKARRTI. Over residues 103–133 the composition is skewed to basic and acidic residues; that stretch reads EAKEPVRRLPEEAIRRRPDEADRLRSEEPVA. The residue at position 152 (S152) is a Phosphoserine. The segment covering 157–170 has biased composition (basic and acidic residues); that stretch reads SERKVVEPLRKPET. S192 and S198 each carry phosphoserine. The tract at residues 259–278 is disordered; sequence PSVPSARAQTTSSTRSYDYA. Over residues 262–274 the composition is skewed to low complexity; the sequence is PSARAQTTSSTRS. Residues 271–400 are required for binding to Med; the sequence is STRSYDYASN…NRWLNSLEQK (130 aa). At S321 the chain carries Phosphoserine. T324 bears the Phosphothreonine mark. The residue at position 326 (S326) is a Phosphoserine. T358 carries the post-translational modification Phosphothreonine. 2 positions are modified to phosphoserine: S378 and S385. Positions 400–424 are essential for nuclear membrane localization and germline stem cell maintenance; that stretch reads KYHIKSKLFIVLLVLLLIGVYYIFY. The essential for nuclear membrane localization stretch occupies residues 406–424; sequence KLFIVLLVLLLIGVYYIFY.

In terms of assembly, interacts with Med. Interacts with Lam. Interacts with aurA, alphaTub84B, gammaTub23C and gammaTub37C. Interacts with Nemp. In terms of processing, phosphorylation at Thr-63 by aurA may be required for exit from mitosis. May be phosphorylated by Cdk1 and Pka-C1. Expressed in all cell types of the germarium and testis. Expressed in nurse cells, follicle cells and oocytes.

It is found in the nucleus inner membrane. Its subcellular location is the nucleus. The protein resides in the nucleoplasm. It localises to the cytoplasm. The protein localises to the chromosome. It is found in the cytoskeleton. Its subcellular location is the spindle pole. The protein resides in the microtubule organizing center. It localises to the centrosome. Functionally, inner nuclear membrane protein. Involved in the attachment of membrane vesicles to chromatin during nuclear assembly, and is probably required for centrosome maturation and cell cycle progression during mitosis. Essential for differentiation of certain tissues and the maintenance of progenitor cell populations. Required for the differentiation and maintenance of male and female germline stem cells (GSCs), as well as the maintenance of somatic cells in the GSC niche. This role is likely to be independent of the BMP (Dpp) pathway that negatively regulates bam transcription during GSC differentiation. During development, plays essential and redundant functions with the other LEM domain proteins; bocks and MAN1. Also has a redundant but important role with bocks during larval development. The protein is Otefin of Drosophila melanogaster (Fruit fly).